The following is a 303-amino-acid chain: Epimerase family protein YfhF (303 aa).

Belongs to the NAD(P)-dependent epimerase/dehydratase family. SDR39U1 subfamily.

In Bacillus subtilis (strain 168), this protein is Epimerase family protein YfhF (yfhF).